The sequence spans 620 residues: 1-deoxy-D-xylulose-5-phosphate synthase (620 aa).

Thiamine diphosphate-binding positions include His80 and 121–123; that span reads GHS. Mg(2+) is bound at residue Asp152. Thiamine diphosphate-binding positions include 153-154, Asn181, Tyr288, and Glu370; that span reads GA. Mg(2+) is bound at residue Asn181.

This sequence belongs to the transketolase family. DXPS subfamily. Homodimer. Mg(2+) serves as cofactor. It depends on thiamine diphosphate as a cofactor.

It catalyses the reaction D-glyceraldehyde 3-phosphate + pyruvate + H(+) = 1-deoxy-D-xylulose 5-phosphate + CO2. Its pathway is metabolic intermediate biosynthesis; 1-deoxy-D-xylulose 5-phosphate biosynthesis; 1-deoxy-D-xylulose 5-phosphate from D-glyceraldehyde 3-phosphate and pyruvate: step 1/1. In terms of biological role, catalyzes the acyloin condensation reaction between C atoms 2 and 3 of pyruvate and glyceraldehyde 3-phosphate to yield 1-deoxy-D-xylulose-5-phosphate (DXP). This is 1-deoxy-D-xylulose-5-phosphate synthase from Escherichia coli O127:H6 (strain E2348/69 / EPEC).